The primary structure comprises 191 residues: Putative inactive glutathione hydrolase 4 (191 aa).

The active-site Nucleophile is threonine 54. L-glutamate is bound by residues threonine 72, asparagine 74, glutamate 93, aspartate 96, serine 126–serine 127, and glycine 147–glycine 148.

This sequence belongs to the gamma-glutamyltransferase family. In terms of tissue distribution, expressed at low levels in embryo, roots and leaves. In mature plants, expression is restricted to vascular tissues of roots, leaves, flowers and siliques.

In Arabidopsis thaliana (Mouse-ear cress), this protein is Putative inactive glutathione hydrolase 4 (GGT4).